Reading from the N-terminus, the 404-residue chain is Formate-dependent phosphoribosylglycinamide formyltransferase (404 aa).

Residues 25–26 (EL) and Glu85 contribute to the N(1)-(5-phospho-beta-D-ribosyl)glycinamide site. ATP-binding positions include Arg118, Lys159, 164-169 (SSGKGQ), 199-202 (EGFI), and Glu207. Residues 123–318 (RLAAEELGLP…EFELHARAIL (196 aa)) form the ATP-grasp domain. The Mg(2+) site is built by Glu277 and Glu289. N(1)-(5-phospho-beta-D-ribosyl)glycinamide is bound by residues Asp296, Lys365, and 372-373 (RR).

The protein belongs to the PurK/PurT family. Homodimer.

It carries out the reaction N(1)-(5-phospho-beta-D-ribosyl)glycinamide + formate + ATP = N(2)-formyl-N(1)-(5-phospho-beta-D-ribosyl)glycinamide + ADP + phosphate + H(+). The protein operates within purine metabolism; IMP biosynthesis via de novo pathway; N(2)-formyl-N(1)-(5-phospho-D-ribosyl)glycinamide from N(1)-(5-phospho-D-ribosyl)glycinamide (formate route): step 1/1. Involved in the de novo purine biosynthesis. Catalyzes the transfer of formate to 5-phospho-ribosyl-glycinamide (GAR), producing 5-phospho-ribosyl-N-formylglycinamide (FGAR). Formate is provided by PurU via hydrolysis of 10-formyl-tetrahydrofolate. The polypeptide is Formate-dependent phosphoribosylglycinamide formyltransferase (Burkholderia mallei (strain NCTC 10247)).